Reading from the N-terminus, the 285-residue chain is Elongation factor Ts (285 aa).

Positions 84 to 87 are involved in Mg(2+) ion dislocation from EF-Tu; the sequence is TDFV.

The protein belongs to the EF-Ts family.

It is found in the cytoplasm. Associates with the EF-Tu.GDP complex and induces the exchange of GDP to GTP. It remains bound to the aminoacyl-tRNA.EF-Tu.GTP complex up to the GTP hydrolysis stage on the ribosome. This is Elongation factor Ts from Bifidobacterium animalis subsp. lactis (strain AD011).